The sequence spans 180 residues: Isopentenyl-diphosphate Delta-isomerase (180 aa).

Mn(2+) is bound by residues His-26 and His-32. Positions 30-168 (ALHLAFSVLL…PELFTAWFPQ (139 aa)) constitute a Nudix hydrolase domain. Cys-70 is a catalytic residue. Mg(2+) is bound at residue Cys-70. Residue His-72 coordinates Mn(2+). Glu-90 contacts Mg(2+). Mn(2+) contacts are provided by Glu-117 and Glu-119. The active site involves Glu-119.

Belongs to the IPP isomerase type 1 family. Mg(2+) serves as cofactor. Mn(2+) is required as a cofactor.

The protein resides in the cytoplasm. The enzyme catalyses isopentenyl diphosphate = dimethylallyl diphosphate. Its pathway is isoprenoid biosynthesis; dimethylallyl diphosphate biosynthesis; dimethylallyl diphosphate from isopentenyl diphosphate: step 1/1. In terms of biological role, catalyzes the 1,3-allylic rearrangement of the homoallylic substrate isopentenyl (IPP) to its highly electrophilic allylic isomer, dimethylallyl diphosphate (DMAPP). This Photobacterium profundum (strain SS9) protein is Isopentenyl-diphosphate Delta-isomerase.